The sequence spans 506 residues: Glucan endo-1,3-beta-glucosidase 13 (506 aa).

The first 22 residues, 1 to 22, serve as a signal peptide directing secretion; that stretch reads MARDFKLIFSISILLLLLDCCY. N-linked (GlcNAc...) asparagine glycosylation occurs at Asn70. The active-site Proton donor is the Glu119. N-linked (GlcNAc...) asparagine glycosylation is found at Asn127, Asn175, and Asn212. The active-site Nucleophile is the Glu264. N-linked (GlcNAc...) asparagine glycans are attached at residues Asn356 and Asn361. Cysteines 370 and 433 form a disulfide. N-linked (GlcNAc...) asparagine glycosylation is found at Asn459 and Asn465. Ser471 carries the GPI-anchor amidated serine lipid modification. The propeptide at 472-506 is removed in mature form; it reads SASTPRGNELLQWILKLCLMISLFFSLQTMNSQAL.

Belongs to the glycosyl hydrolase 17 family. Post-translationally, contains two additional disulfide bonds.

The protein localises to the secreted. It is found in the cell wall. Its subcellular location is the cell membrane. The enzyme catalyses Hydrolysis of (1-&gt;3)-beta-D-glucosidic linkages in (1-&gt;3)-beta-D-glucans.. The sequence is that of Glucan endo-1,3-beta-glucosidase 13 from Arabidopsis thaliana (Mouse-ear cress).